The primary structure comprises 70 residues: Large ribosomal subunit protein eL43 (70 aa).

4 residues coordinate Zn(2+): Cys36, Cys39, Cys55, and Cys58. The segment at 36–58 (CPVCKTTGKVVRIASGVWYCKKC) adopts a C4-type zinc-finger fold.

The protein belongs to the eukaryotic ribosomal protein eL43 family. Putative zinc-binding subfamily. Part of the 50S ribosomal subunit. Requires Zn(2+) as cofactor.

Functionally, binds to the 23S rRNA. The polypeptide is Large ribosomal subunit protein eL43 (Sulfurisphaera tokodaii (strain DSM 16993 / JCM 10545 / NBRC 100140 / 7) (Sulfolobus tokodaii)).